The sequence spans 593 residues: UvrABC system protein C (593 aa).

One can recognise a GIY-YIG domain in the interval 17-94; the sequence is MEPGCYLMKD…IKQYQPRYNI (78 aa). The UVR domain occupies 199 to 234; sequence KTILKSLEERMLTASESLDFERAKEYRDLIQHIQNL.

It belongs to the UvrC family. Interacts with UvrB in an incision complex.

It localises to the cytoplasm. The UvrABC repair system catalyzes the recognition and processing of DNA lesions. UvrC both incises the 5' and 3' sides of the lesion. The N-terminal half is responsible for the 3' incision and the C-terminal half is responsible for the 5' incision. This chain is UvrABC system protein C, found in Staphylococcus aureus (strain USA300).